A 492-amino-acid chain; its full sequence is B3 domain-containing protein REM3 (492 aa).

Positions 12–104 form a DNA-binding region, TF-B3 1; sequence NRPFFVRSLA…VFHVTPSGRS (93 aa). The segment covering 105–116 has biased composition (low complexity); it reads FSQIRTSSSSGD. Residues 105-134 are disordered; the sequence is FSQIRTSSSSGDYDSDDDDDEAGDDDSDSK. Residues 117–131 are compositionally biased toward acidic residues; it reads YDSDDDDDEAGDDDS. 2 DNA-binding regions (TF-B3) span residues 154-250 and 286-382; these read YCLL…LCFK and FLTV…FCSE. Over residues 385 to 395 the composition is skewed to basic and acidic residues; that stretch reads IEQEEAPEERG. The disordered stretch occupies residues 385 to 427; it reads IEQEEAPEERGTPLPKRARVSAEVGHSRRTQAPNKSSDDPKIL.

It localises to the nucleus. The polypeptide is B3 domain-containing protein REM3 (REM3) (Arabidopsis thaliana (Mouse-ear cress)).